Here is a 229-residue protein sequence, read N- to C-terminus: Aminopyrimidine aminohydrolase (229 aa).

A substrate-binding site is contributed by D44. C137 acts as the Nucleophile in catalysis. Substrate-binding residues include Y141 and Y167. The Proton donor role is filled by E208.

The protein belongs to the TenA family. In terms of assembly, homotetramer.

The enzyme catalyses 4-amino-5-aminomethyl-2-methylpyrimidine + H2O = 4-amino-5-hydroxymethyl-2-methylpyrimidine + NH4(+). It carries out the reaction thiamine + H2O = 5-(2-hydroxyethyl)-4-methylthiazole + 4-amino-5-hydroxymethyl-2-methylpyrimidine + H(+). It functions in the pathway cofactor biosynthesis; thiamine diphosphate biosynthesis. Catalyzes an amino-pyrimidine hydrolysis reaction at the C5' of the pyrimidine moiety of thiamine compounds, a reaction that is part of a thiamine salvage pathway. Thus, catalyzes the conversion of 4-amino-5-aminomethyl-2-methylpyrimidine to 4-amino-5-hydroxymethyl-2-methylpyrimidine (HMP). Is also able to catalyze the hydrolytic cleavage of thiamine; however, this thiaminase activity may not be physiologically relevant. Therefore, is probably involved in the regeneration of the thiamine pyrimidine from thiamine degraded products present in the environment, rather than in thiamine degradation. This chain is Aminopyrimidine aminohydrolase, found in Staphylococcus aureus (strain MRSA252).